Consider the following 345-residue polypeptide: Beta-2-glycoprotein 1 (345 aa).

Positions Met-1 to Ala-19 are cleaved as a signal peptide. Sushi domains are found at residues Arg-21–Pro-81, Arg-82–Pro-139, Ile-140–Glu-202, and Val-203–Ala-262. 11 disulfide bridges follow: Cys-23–Cys-66, Cys-51–Cys-79, Cys-84–Cys-124, Cys-110–Cys-137, Cys-142–Cys-188, Cys-174–Cys-200, Cys-205–Cys-248, Cys-234–Cys-260, Cys-264–Cys-315, Cys-300–Cys-325, and Cys-307–Cys-345. Thr-33 is a glycosylation site (O-linked (GalNAc...) threonine). O-linked (GalNAc...) threonine glycosylation is present at Thr-149. N-linked (GlcNAc...) asparagine glycosylation is found at Asn-162, Asn-183, and Asn-193. An N-linked (GlcNAc...) asparagine glycan is attached at Asn-253. The interval Ser-263–Cys-345 is sushi-like.

Expressed by the liver and secreted in plasma.

It localises to the secreted. Functionally, binds to various kinds of negatively charged substances such as heparin, phospholipids, and dextran sulfate. May prevent activation of the intrinsic blood coagulation cascade by binding to phospholipids on the surface of damaged cells. The protein is Beta-2-glycoprotein 1 (APOH) of Pan troglodytes (Chimpanzee).